Here is a 62-residue protein sequence, read N- to C-terminus: Large ribosomal subunit protein eL37 (62 aa).

The Zn(2+) site is built by Cys20, Cys23, Cys35, and Cys38. The C4-type zinc-finger motif lies at 20–38 (CRRCGRRAYHVRKGYCAAC).

It belongs to the eukaryotic ribosomal protein eL37 family. Requires Zn(2+) as cofactor.

Binds to the 23S rRNA. This chain is Large ribosomal subunit protein eL37, found in Methanopyrus kandleri (strain AV19 / DSM 6324 / JCM 9639 / NBRC 100938).